A 93-amino-acid polypeptide reads, in one-letter code: Translation initiation factor IF-1 (93 aa).

One can recognise an S1-like domain in the interval 1 to 72 (MAKEELIQFE…EKGRLIFRHK (72 aa)). The interval 69–93 (FRHKDERPSGAPRGGPPRGGQFRRR) is disordered.

Belongs to the IF-1 family. As to quaternary structure, component of the 30S ribosomal translation pre-initiation complex which assembles on the 30S ribosome in the order IF-2 and IF-3, IF-1 and N-formylmethionyl-tRNA(fMet); mRNA recruitment can occur at any time during PIC assembly.

Its subcellular location is the cytoplasm. Functionally, one of the essential components for the initiation of protein synthesis. Stabilizes the binding of IF-2 and IF-3 on the 30S subunit to which N-formylmethionyl-tRNA(fMet) subsequently binds. Helps modulate mRNA selection, yielding the 30S pre-initiation complex (PIC). Upon addition of the 50S ribosomal subunit IF-1, IF-2 and IF-3 are released leaving the mature 70S translation initiation complex. This chain is Translation initiation factor IF-1, found in Nitrobacter hamburgensis (strain DSM 10229 / NCIMB 13809 / X14).